Reading from the N-terminus, the 190-residue chain is Peptidyl-tRNA hydrolase (190 aa).

TRNA is bound at residue tyrosine 14. Histidine 19 functions as the Proton acceptor in the catalytic mechanism. Residues tyrosine 64, asparagine 66, and asparagine 112 each contribute to the tRNA site.

This sequence belongs to the PTH family. Monomer.

It localises to the cytoplasm. The catalysed reaction is an N-acyl-L-alpha-aminoacyl-tRNA + H2O = an N-acyl-L-amino acid + a tRNA + H(+). Its function is as follows. Hydrolyzes ribosome-free peptidyl-tRNAs (with 1 or more amino acids incorporated), which drop off the ribosome during protein synthesis, or as a result of ribosome stalling. Catalyzes the release of premature peptidyl moieties from peptidyl-tRNA molecules trapped in stalled 50S ribosomal subunits, and thus maintains levels of free tRNAs and 50S ribosomes. The chain is Peptidyl-tRNA hydrolase from Chlorobium phaeovibrioides (strain DSM 265 / 1930) (Prosthecochloris vibrioformis (strain DSM 265)).